A 258-amino-acid polypeptide reads, in one-letter code: Acyl-[acyl-carrier-protein]--UDP-N-acetylglucosamine O-acyltransferase (258 aa).

This sequence belongs to the transferase hexapeptide repeat family. LpxA subfamily. As to quaternary structure, homotrimer.

It localises to the cytoplasm. The catalysed reaction is a (3R)-hydroxyacyl-[ACP] + UDP-N-acetyl-alpha-D-glucosamine = a UDP-3-O-[(3R)-3-hydroxyacyl]-N-acetyl-alpha-D-glucosamine + holo-[ACP]. It participates in glycolipid biosynthesis; lipid IV(A) biosynthesis; lipid IV(A) from (3R)-3-hydroxytetradecanoyl-[acyl-carrier-protein] and UDP-N-acetyl-alpha-D-glucosamine: step 1/6. Functionally, involved in the biosynthesis of lipid A, a phosphorylated glycolipid that anchors the lipopolysaccharide to the outer membrane of the cell. The polypeptide is Acyl-[acyl-carrier-protein]--UDP-N-acetylglucosamine O-acyltransferase (Alkalilimnicola ehrlichii (strain ATCC BAA-1101 / DSM 17681 / MLHE-1)).